Consider the following 270-residue polypeptide: Undecaprenyl-diphosphatase 1 (270 aa).

6 helical membrane passes run 41–61, 88–108, 117–137, 192–212, 218–238, and 250–270; these read IEGF…VLLV, FRFI…GVLF, KDGV…LFLI, FSFL…ITDI, LGEL…ATYF, and GNLV…LIFA.

The protein belongs to the UppP family.

The protein resides in the cell membrane. It catalyses the reaction di-trans,octa-cis-undecaprenyl diphosphate + H2O = di-trans,octa-cis-undecaprenyl phosphate + phosphate + H(+). In terms of biological role, catalyzes the dephosphorylation of undecaprenyl diphosphate (UPP). Confers resistance to bacitracin. In Bacillus licheniformis (strain ATCC 14580 / DSM 13 / JCM 2505 / CCUG 7422 / NBRC 12200 / NCIMB 9375 / NCTC 10341 / NRRL NRS-1264 / Gibson 46), this protein is Undecaprenyl-diphosphatase 1.